We begin with the raw amino-acid sequence, 284 residues long: AA14 family lytic polysaccharide monooxygenase B (284 aa).

An N-terminal signal peptide occupies residues 1-20 (MGYLSKLVTSVVFAIPLASA). 4 N-linked (GlcNAc...) asparagine glycosylation sites follow: N42, N96, N142, and N183. Cysteines 197 and 218 form a disulfide.

Belongs to the polysaccharide monooxygenase AA14 family. It depends on Cu(2+) as a cofactor.

The protein resides in the secreted. Lytic polysaccharide monooxygenase (LPMO) that plays decomposes some specific network structures formed between cellulose and hemicellulose in the plant cell walls. Catalysis by LPMOs requires the reduction of the active-site copper from Cu(II) to Cu(I) by a reducing agent and H(2)O(2) or O(2) as a cosubstrate. This is AA14 family lytic polysaccharide monooxygenase B from Talaromyces rugulosus (Penicillium rugulosum).